Consider the following 379-residue polypeptide: Succinyl-diaminopimelate desuccinylase (379 aa).

Position 68 (His68) interacts with Zn(2+). Residue Asp70 is part of the active site. Asp101 serves as a coordination point for Zn(2+). Residue Glu135 is the Proton acceptor of the active site. 3 residues coordinate Zn(2+): Glu136, Glu164, and His350.

Belongs to the peptidase M20A family. DapE subfamily. As to quaternary structure, homodimer. It depends on Zn(2+) as a cofactor. The cofactor is Co(2+).

It catalyses the reaction N-succinyl-(2S,6S)-2,6-diaminopimelate + H2O = (2S,6S)-2,6-diaminopimelate + succinate. The protein operates within amino-acid biosynthesis; L-lysine biosynthesis via DAP pathway; LL-2,6-diaminopimelate from (S)-tetrahydrodipicolinate (succinylase route): step 3/3. In terms of biological role, catalyzes the hydrolysis of N-succinyl-L,L-diaminopimelic acid (SDAP), forming succinate and LL-2,6-diaminopimelate (DAP), an intermediate involved in the bacterial biosynthesis of lysine and meso-diaminopimelic acid, an essential component of bacterial cell walls. This Bordetella pertussis (strain Tohama I / ATCC BAA-589 / NCTC 13251) protein is Succinyl-diaminopimelate desuccinylase.